The sequence spans 209 residues: Ribonuclease HII (209 aa).

Residues 7–198 enclose the RNase H type-2 domain; sequence GPVAGVDEAG…VAKAHQEWLH (192 aa). A divalent metal cation is bound by residues Asp-13, Glu-14, and Asp-107.

Belongs to the RNase HII family. Mn(2+) is required as a cofactor. It depends on Mg(2+) as a cofactor.

The protein resides in the cytoplasm. It catalyses the reaction Endonucleolytic cleavage to 5'-phosphomonoester.. Its function is as follows. Endonuclease that specifically degrades the RNA of RNA-DNA hybrids. This is Ribonuclease HII from Corynebacterium glutamicum (strain R).